A 111-amino-acid chain; its full sequence is Cytochrome c (111 aa).

A1 carries the post-translational modification N-acetylalanine. Positions 22, 25, and 26 each coordinate heme c. K80 carries the N6,N6,N6-trimethyllysine modification. Heme c is bound at residue M88. An N6,N6,N6-trimethyllysine modification is found at K94.

This sequence belongs to the cytochrome c family. Post-translationally, binds 1 heme c group covalently per subunit.

It localises to the mitochondrion intermembrane space. Functionally, electron carrier protein. The oxidized form of the cytochrome c heme group can accept an electron from the heme group of the cytochrome c1 subunit of cytochrome reductase. Cytochrome c then transfers this electron to the cytochrome oxidase complex, the final protein carrier in the mitochondrial electron-transport chain. In Guizotia abyssinica (Niger), this protein is Cytochrome c.